A 278-amino-acid polypeptide reads, in one-letter code: Energy-coupling factor transporter ATP-binding protein EcfA1 (278 aa).

One can recognise an ABC transporter domain in the interval 5-239; the sequence is IRVQHLNYTY…GMELLRLGLD (235 aa). An ATP-binding site is contributed by 39–46; it reads GHNGSGKS. Catalysis depends on E165, which acts as the Proton acceptor.

It belongs to the ABC transporter superfamily. Energy-coupling factor EcfA family. As to quaternary structure, forms a stable energy-coupling factor (ECF) transporter complex probably composed of 2 membrane-embedded substrate-binding proteins (S component), 2 ATP-binding proteins (A component) and 2 transmembrane proteins (T component). This complex interacts with a number of substrate-specific components, including FolT and ThiT for 5-formyltetrahydrofolate and thiamine respectively.

The protein localises to the cell membrane. Functionally, ATP-binding (A) component of a common energy-coupling factor (ECF) ABC-transporter complex. Unlike classic ABC transporters this ECF transporter provides the energy necessary to transport a number of different substrates including 5-formyltetrahydrofolate and thiamine. Expression of the complex plus FolT or ThiT in Lactococcus lactis subsp. cremoris (strain NZ9000) allows 5-formyltetrahydrofolate or thiamine uptake respectively; 5-formyltetrahydrofolate or thiamine are not taken up in the absence of FolT/ThiT or the EcfA1A2T complex. Deenergized L.lactis subsp. cremoris (treated with 2-deoxyglucose) does not take up substrate. This Lacticaseibacillus paracasei (strain ATCC 334 / BCRC 17002 / CCUG 31169 / CIP 107868 / KCTC 3260 / NRRL B-441) (Lactobacillus paracasei) protein is Energy-coupling factor transporter ATP-binding protein EcfA1.